A 285-amino-acid polypeptide reads, in one-letter code: Protoheme IX farnesyltransferase (285 aa).

9 consecutive transmembrane segments (helical) span residues 13–33 (LGKL…AFLA), 40–60 (LLPI…AMII), 89–109 (EAII…FIDN), 110–130 (ILTA…YTIL), 137–157 (LNIV…YTSL), 165–185 (GFLL…SLAL), 194–214 (AHYP…AIAI), 218–238 (LMIP…LIAF), and 265–285 (FIFS…VKLI).

The protein belongs to the UbiA prenyltransferase family. Protoheme IX farnesyltransferase subfamily.

It is found in the cell membrane. It catalyses the reaction heme b + (2E,6E)-farnesyl diphosphate + H2O = Fe(II)-heme o + diphosphate. It participates in porphyrin-containing compound metabolism; heme O biosynthesis; heme O from protoheme: step 1/1. Functionally, converts heme B (protoheme IX) to heme O by substitution of the vinyl group on carbon 2 of heme B porphyrin ring with a hydroxyethyl farnesyl side group. This chain is Protoheme IX farnesyltransferase, found in Saccharolobus islandicus (strain Y.G.57.14 / Yellowstone #1) (Sulfolobus islandicus).